A 114-amino-acid polypeptide reads, in one-letter code: Iron-sulfur cluster insertion protein ErpA (114 aa).

Residues Cys42, Cys106, and Cys108 each coordinate iron-sulfur cluster.

Belongs to the HesB/IscA family. In terms of assembly, homodimer. The cofactor is iron-sulfur cluster.

Its function is as follows. Required for insertion of 4Fe-4S clusters for at least IspG. The chain is Iron-sulfur cluster insertion protein ErpA from Cronobacter sakazakii (strain ATCC BAA-894) (Enterobacter sakazakii).